Reading from the N-terminus, the 174-residue chain is Nucleoside-triphosphatase THEP1 (174 aa).

ATP-binding positions include 7–14 and 94–101; these read GRPGVGKT and LIIIDEIG.

The protein belongs to the THEP1 NTPase family.

The catalysed reaction is a ribonucleoside 5'-triphosphate + H2O = a ribonucleoside 5'-diphosphate + phosphate + H(+). Functionally, has nucleotide phosphatase activity towards ATP, GTP, CTP, TTP and UTP. May hydrolyze nucleoside diphosphates with lower efficiency. This is Nucleoside-triphosphatase THEP1 from Thermotoga sp. (strain RQ2).